We begin with the raw amino-acid sequence, 259 residues long: MLALISPAKTLDYETALPTDEFTQPRLLEHSAQLIDVCRKLSASEIASLMSVSEKIATLNADRFRDWKPEFDFSNARQAIYAFKGDVYTGLDAYHLKDKDIDFAQQHLRMLSGLYGLLRPLDLMMPYRLEMGTKLKNTRGHNLYEFWDDIITNQINEDLAAIKSELLVNLASDEYYKSVNEKKIKAEIVKPVFLDQKNGKYKVISFYAKKARGLMARFIIENQLNKAEDLKAFNTEGYYFDADNSSAKELVFKRDEQQA.

Belongs to the UPF0246 family.

The chain is UPF0246 protein ABBFA_001173 from Acinetobacter baumannii (strain AB307-0294).